The sequence spans 689 residues: DNA-directed RNA polymerase subunit beta' (689 aa).

Zn(2+) is bound by residues cysteine 69, cysteine 71, cysteine 87, and cysteine 90. Mg(2+) is bound by residues aspartate 489, aspartate 491, and aspartate 493.

The protein belongs to the RNA polymerase beta' chain family. RpoC1 subfamily. In terms of assembly, in plastids the minimal PEP RNA polymerase catalytic core is composed of four subunits: alpha, beta, beta', and beta''. When a (nuclear-encoded) sigma factor is associated with the core the holoenzyme is formed, which can initiate transcription. Mg(2+) is required as a cofactor. It depends on Zn(2+) as a cofactor.

It localises to the plastid. It is found in the chloroplast. It carries out the reaction RNA(n) + a ribonucleoside 5'-triphosphate = RNA(n+1) + diphosphate. Functionally, DNA-dependent RNA polymerase catalyzes the transcription of DNA into RNA using the four ribonucleoside triphosphates as substrates. The chain is DNA-directed RNA polymerase subunit beta' from Helianthus annuus (Common sunflower).